The primary structure comprises 650 residues: Probable LIM domain-containing serine/threonine-protein kinase DDB_G0287001 (650 aa).

2 consecutive LIM zinc-binding domains span residues 4 to 63 and 64 to 122; these read NNCG…KLNA and RKCF…PSDK. 3 disordered regions span residues 118–138, 171–197, and 293–320; these read KPSD…LPGK, LSSS…SSFM, and LLNS…NLNT. The span at 173 to 188 shows a compositional bias: gly residues; sequence SSGGSGNSISGSGGTN. Residues 386 to 643 enclose the Protein kinase domain; that stretch reads VAFGDVIASG…DTLKKISESL (258 aa). ATP contacts are provided by residues 392–400 and K413; that span reads IASGASGKV. The active-site Proton acceptor is the D509.

It belongs to the protein kinase superfamily. TKL Ser/Thr protein kinase family.

The enzyme catalyses L-seryl-[protein] + ATP = O-phospho-L-seryl-[protein] + ADP + H(+). It carries out the reaction L-threonyl-[protein] + ATP = O-phospho-L-threonyl-[protein] + ADP + H(+). The polypeptide is Probable LIM domain-containing serine/threonine-protein kinase DDB_G0287001 (Dictyostelium discoideum (Social amoeba)).